We begin with the raw amino-acid sequence, 357 residues long: Phosphate acyltransferase (357 aa).

The protein belongs to the PlsX family. Homodimer. Probably interacts with PlsY.

Its subcellular location is the cytoplasm. It carries out the reaction a fatty acyl-[ACP] + phosphate = an acyl phosphate + holo-[ACP]. It functions in the pathway lipid metabolism; phospholipid metabolism. Functionally, catalyzes the reversible formation of acyl-phosphate (acyl-PO(4)) from acyl-[acyl-carrier-protein] (acyl-ACP). This enzyme utilizes acyl-ACP as fatty acyl donor, but not acyl-CoA. The protein is Phosphate acyltransferase of Roseobacter denitrificans (strain ATCC 33942 / OCh 114) (Erythrobacter sp. (strain OCh 114)).